Consider the following 238-residue polypeptide: Endonuclease V (238 aa).

Residues Asp-46 and Asp-116 each coordinate Mg(2+).

This sequence belongs to the endonuclease V family. It depends on Mg(2+) as a cofactor.

The protein localises to the cytoplasm. The enzyme catalyses Endonucleolytic cleavage at apurinic or apyrimidinic sites to products with a 5'-phosphate.. Functionally, DNA repair enzyme involved in the repair of deaminated bases. Selectively cleaves double-stranded DNA at the second phosphodiester bond 3' to a deoxyinosine leaving behind the intact lesion on the nicked DNA. The polypeptide is Endonuclease V (Bacillus subtilis (strain 168)).